Consider the following 337-residue polypeptide: Adenosine deaminase (337 aa).

Zn(2+)-binding residues include histidine 12 and histidine 14. Substrate-binding residues include histidine 14, aspartate 16, and glycine 170. Histidine 197 contributes to the Zn(2+) binding site. Glutamate 200 serves as the catalytic Proton donor. Aspartate 278 provides a ligand contact to Zn(2+). Residue aspartate 279 coordinates substrate.

The protein belongs to the metallo-dependent hydrolases superfamily. Adenosine and AMP deaminases family. Adenosine deaminase subfamily. Zn(2+) is required as a cofactor.

The catalysed reaction is adenosine + H2O + H(+) = inosine + NH4(+). The enzyme catalyses 2'-deoxyadenosine + H2O + H(+) = 2'-deoxyinosine + NH4(+). In terms of biological role, catalyzes the hydrolytic deamination of adenosine and 2-deoxyadenosine. The chain is Adenosine deaminase from Pectobacterium atrosepticum (strain SCRI 1043 / ATCC BAA-672) (Erwinia carotovora subsp. atroseptica).